The following is a 383-amino-acid chain: Acetylornithine deacetylase (383 aa).

H80 lines the Zn(2+) pocket. D82 is a catalytic residue. D112 contacts Zn(2+). E144 is an active-site residue. Zn(2+) contacts are provided by E145, E169, and H355.

It belongs to the peptidase M20A family. ArgE subfamily. Homodimer. Zn(2+) serves as cofactor. The cofactor is Co(2+). Requires glutathione as cofactor.

The protein resides in the cytoplasm. It catalyses the reaction N(2)-acetyl-L-ornithine + H2O = L-ornithine + acetate. It functions in the pathway amino-acid biosynthesis; L-arginine biosynthesis; L-ornithine from N(2)-acetyl-L-ornithine (linear): step 1/1. In terms of biological role, catalyzes the hydrolysis of the amide bond of N(2)-acetylated L-amino acids. Cleaves the acetyl group from N-acetyl-L-ornithine to form L-ornithine, an intermediate in L-arginine biosynthesis pathway, and a branchpoint in the synthesis of polyamines. The protein is Acetylornithine deacetylase of Shigella boydii serotype 18 (strain CDC 3083-94 / BS512).